The sequence spans 226 residues: Leucyl/phenylalanyl-tRNA--protein transferase (226 aa).

It belongs to the L/F-transferase family.

It localises to the cytoplasm. It carries out the reaction N-terminal L-lysyl-[protein] + L-leucyl-tRNA(Leu) = N-terminal L-leucyl-L-lysyl-[protein] + tRNA(Leu) + H(+). The catalysed reaction is N-terminal L-arginyl-[protein] + L-leucyl-tRNA(Leu) = N-terminal L-leucyl-L-arginyl-[protein] + tRNA(Leu) + H(+). The enzyme catalyses L-phenylalanyl-tRNA(Phe) + an N-terminal L-alpha-aminoacyl-[protein] = an N-terminal L-phenylalanyl-L-alpha-aminoacyl-[protein] + tRNA(Phe). Functions in the N-end rule pathway of protein degradation where it conjugates Leu, Phe and, less efficiently, Met from aminoacyl-tRNAs to the N-termini of proteins containing an N-terminal arginine or lysine. The protein is Leucyl/phenylalanyl-tRNA--protein transferase of Pseudomonas paraeruginosa (strain DSM 24068 / PA7) (Pseudomonas aeruginosa (strain PA7)).